The following is a 782-amino-acid chain: Endonuclease MutS2 (782 aa).

336–343 is a binding site for ATP; it reads GPNTGGKT. Residues 707-782 enclose the Smr domain; sequence LDLRGYRYDE…GFGVTVVEIK (76 aa).

It belongs to the DNA mismatch repair MutS family. MutS2 subfamily. In terms of assembly, homodimer. Binds to stalled ribosomes, contacting rRNA.

In terms of biological role, endonuclease that is involved in the suppression of homologous recombination and thus may have a key role in the control of bacterial genetic diversity. Its function is as follows. Acts as a ribosome collision sensor, splitting the ribosome into its 2 subunits. Detects stalled/collided 70S ribosomes which it binds and splits by an ATP-hydrolysis driven conformational change. Acts upstream of the ribosome quality control system (RQC), a ribosome-associated complex that mediates the extraction of incompletely synthesized nascent chains from stalled ribosomes and their subsequent degradation. Probably generates substrates for RQC. This is Endonuclease MutS2 from Staphylococcus saprophyticus subsp. saprophyticus (strain ATCC 15305 / DSM 20229 / NCIMB 8711 / NCTC 7292 / S-41).